Consider the following 156-residue polypeptide: Small ribosomal subunit protein uS7 (156 aa).

This sequence belongs to the universal ribosomal protein uS7 family. In terms of assembly, part of the 30S ribosomal subunit. Contacts proteins S9 and S11.

In terms of biological role, one of the primary rRNA binding proteins, it binds directly to 16S rRNA where it nucleates assembly of the head domain of the 30S subunit. Is located at the subunit interface close to the decoding center, probably blocks exit of the E-site tRNA. This chain is Small ribosomal subunit protein uS7, found in Bacillus cytotoxicus (strain DSM 22905 / CIP 110041 / 391-98 / NVH 391-98).